A 238-amino-acid chain; its full sequence is Aspartate/glutamate leucyltransferase (238 aa).

The protein belongs to the R-transferase family. Bpt subfamily.

It localises to the cytoplasm. The catalysed reaction is N-terminal L-glutamyl-[protein] + L-leucyl-tRNA(Leu) = N-terminal L-leucyl-L-glutamyl-[protein] + tRNA(Leu) + H(+). It carries out the reaction N-terminal L-aspartyl-[protein] + L-leucyl-tRNA(Leu) = N-terminal L-leucyl-L-aspartyl-[protein] + tRNA(Leu) + H(+). Functions in the N-end rule pathway of protein degradation where it conjugates Leu from its aminoacyl-tRNA to the N-termini of proteins containing an N-terminal aspartate or glutamate. This chain is Aspartate/glutamate leucyltransferase, found in Shewanella sp. (strain ANA-3).